The chain runs to 81 residues: Large ribosomal subunit protein bL31B (81 aa).

It belongs to the bacterial ribosomal protein bL31 family. Type B subfamily. Part of the 50S ribosomal subunit.

The sequence is that of Large ribosomal subunit protein bL31B from Lactococcus lactis subsp. cremoris (strain MG1363).